The following is a 527-amino-acid chain: ADP-ribosylation factor-like protein 13B (527 aa).

GTP is bound by residues 26-33, 69-73, and 128-131; these read GLDNAGKT, DLGGG, and NKQD. The segment covering 200-248 has biased composition (basic and acidic residues); it reads EEVRQEEARKKKEREERLRKQREERLRQQKEEEERAREVEKENELHDGK. Disordered regions lie at residues 200-252 and 300-503; these read EEVR…APSL and GLPH…FSLV. The segment covering 381 to 444 has biased composition (low complexity); sequence QPSDAGVGSS…GSVFAPRPAS (64 aa). The segment covering 445–457 has biased composition (gly residues); it reads AGGGGPGSRGSGS.

The protein belongs to the small GTPase superfamily. Arf family. Monomer.

Its subcellular location is the cell projection. It is found in the cilium membrane. Functionally, cilium-specific protein required to control the microtubule-based, ciliary axoneme structure. May act by maintaining the association between IFT subcomplexes A and B. This Chlamydomonas reinhardtii (Chlamydomonas smithii) protein is ADP-ribosylation factor-like protein 13B (ARL13).